The primary structure comprises 175 residues: Crossover junction endodeoxyribonuclease RuvC (175 aa).

Active-site residues include Asp12, Glu72, and Asp144. The Mg(2+) site is built by Asp12, Glu72, and Asp144.

The protein belongs to the RuvC family. As to quaternary structure, homodimer which binds Holliday junction (HJ) DNA. The HJ becomes 2-fold symmetrical on binding to RuvC with unstacked arms; it has a different conformation from HJ DNA in complex with RuvA. In the full resolvosome a probable DNA-RuvA(4)-RuvB(12)-RuvC(2) complex forms which resolves the HJ. It depends on Mg(2+) as a cofactor.

The protein resides in the cytoplasm. The catalysed reaction is Endonucleolytic cleavage at a junction such as a reciprocal single-stranded crossover between two homologous DNA duplexes (Holliday junction).. The RuvA-RuvB-RuvC complex processes Holliday junction (HJ) DNA during genetic recombination and DNA repair. Endonuclease that resolves HJ intermediates. Cleaves cruciform DNA by making single-stranded nicks across the HJ at symmetrical positions within the homologous arms, yielding a 5'-phosphate and a 3'-hydroxyl group; requires a central core of homology in the junction. The consensus cleavage sequence is 5'-(A/T)TT(C/G)-3'. Cleavage occurs on the 3'-side of the TT dinucleotide at the point of strand exchange. HJ branch migration catalyzed by RuvA-RuvB allows RuvC to scan DNA until it finds its consensus sequence, where it cleaves and resolves the cruciform DNA. This is Crossover junction endodeoxyribonuclease RuvC from Beijerinckia indica subsp. indica (strain ATCC 9039 / DSM 1715 / NCIMB 8712).